Consider the following 100-residue polypeptide: Urease subunit gamma (100 aa).

This sequence belongs to the urease gamma subunit family. In terms of assembly, probable heterotrimer of UreA (gamma), UreB (beta) and UreC (alpha) subunits. Three heterotrimers associate to form the active enzyme. The trimeric urease interacts with an accessory complex composed of UreD, UreF and UreG, which is required for the assembly of the nickel containing metallocenter of UreC. The UreE protein may also play a direct role in nickel transfer to the urease apoprotein.

The protein localises to the cytoplasm. The catalysed reaction is urea + 2 H2O + H(+) = hydrogencarbonate + 2 NH4(+). Its pathway is nitrogen metabolism; urea degradation; CO(2) and NH(3) from urea (urease route): step 1/1. The protein is Urease subunit gamma of Proteus mirabilis (strain HI4320).